A 666-amino-acid polypeptide reads, in one-letter code: Protein translocase subunit SecA 2 (666 aa).

ATP contacts are provided by residues Gln-119, 137-141 (GEGKS), and Asp-546.

This sequence belongs to the SecA family. As to quaternary structure, monomer and homodimer. Part of the essential Sec protein translocation apparatus which comprises SecA, SecYEG and auxiliary proteins SecDF-YajC and YidC.

It is found in the cell inner membrane. Its subcellular location is the cytoplasm. It catalyses the reaction ATP + H2O + cellular proteinSide 1 = ADP + phosphate + cellular proteinSide 2.. Part of the Sec protein translocase complex. Interacts with the SecYEG preprotein conducting channel. Has a central role in coupling the hydrolysis of ATP to the transfer of proteins into and across the cell membrane, serving both as a receptor for the preprotein-SecB complex and as an ATP-driven molecular motor driving the stepwise translocation of polypeptide chains across the membrane. In Nitrosospira multiformis (strain ATCC 25196 / NCIMB 11849 / C 71), this protein is Protein translocase subunit SecA 2.